Here is a 172-residue protein sequence, read N- to C-terminus: Small ribosomal subunit protein uS5 (172 aa).

Positions 17–80 (LREKMISVNR…EQARRNMFKV (64 aa)) constitute an S5 DRBM domain.

The protein belongs to the universal ribosomal protein uS5 family. Part of the 30S ribosomal subunit. Contacts proteins S4 and S8.

With S4 and S12 plays an important role in translational accuracy. In terms of biological role, located at the back of the 30S subunit body where it stabilizes the conformation of the head with respect to the body. This chain is Small ribosomal subunit protein uS5, found in Burkholderia thailandensis (strain ATCC 700388 / DSM 13276 / CCUG 48851 / CIP 106301 / E264).